Consider the following 545-residue polypeptide: Glucose-6-phosphate isomerase (545 aa).

Glu351 serves as the catalytic Proton donor. Catalysis depends on residues His382 and Lys510.

This sequence belongs to the GPI family.

It localises to the cytoplasm. The catalysed reaction is alpha-D-glucose 6-phosphate = beta-D-fructose 6-phosphate. It functions in the pathway carbohydrate biosynthesis; gluconeogenesis. The protein operates within carbohydrate degradation; glycolysis; D-glyceraldehyde 3-phosphate and glycerone phosphate from D-glucose: step 2/4. Its function is as follows. Catalyzes the reversible isomerization of glucose-6-phosphate to fructose-6-phosphate. The polypeptide is Glucose-6-phosphate isomerase (Shewanella amazonensis (strain ATCC BAA-1098 / SB2B)).